Consider the following 253-residue polypeptide: Type III pantothenate kinase (253 aa).

Position 6-13 (6-13 (DVGNTNTV)) interacts with ATP. Residue 103–106 (GADR) coordinates substrate. Catalysis depends on D105, which acts as the Proton acceptor. D125 contributes to the K(+) binding site. An ATP-binding site is contributed by T128. T180 is a substrate binding site.

The protein belongs to the type III pantothenate kinase family. In terms of assembly, homodimer. The cofactor is NH4(+). Requires K(+) as cofactor.

It localises to the cytoplasm. It carries out the reaction (R)-pantothenate + ATP = (R)-4'-phosphopantothenate + ADP + H(+). It participates in cofactor biosynthesis; coenzyme A biosynthesis; CoA from (R)-pantothenate: step 1/5. Functionally, catalyzes the phosphorylation of pantothenate (Pan), the first step in CoA biosynthesis. The sequence is that of Type III pantothenate kinase from Parafrankia sp. (strain EAN1pec).